Here is a 335-residue protein sequence, read N- to C-terminus: GTPase Obg (335 aa).

Residues 1–158 (MFLDQITIEL…RQVELELKLI (158 aa)) form the Obg domain. Positions 159–334 (ADIGLVGFPN…LNSLFTNRLS (176 aa)) constitute an OBG-type G domain. GTP contacts are provided by residues 165-172 (GFPNAGKS), 190-194 (FTTLQ), 215-218 (DIPG), 285-288 (NKID), and 315-317 (SGL). Positions 172 and 192 each coordinate Mg(2+).

This sequence belongs to the TRAFAC class OBG-HflX-like GTPase superfamily. OBG GTPase family. In terms of assembly, monomer. It depends on Mg(2+) as a cofactor.

It localises to the cytoplasm. An essential GTPase which binds GTP, GDP and possibly (p)ppGpp with moderate affinity, with high nucleotide exchange rates and a fairly low GTP hydrolysis rate. Plays a role in control of the cell cycle, stress response, ribosome biogenesis and in those bacteria that undergo differentiation, in morphogenesis control. This is GTPase Obg from Chlamydia caviae (strain ATCC VR-813 / DSM 19441 / 03DC25 / GPIC) (Chlamydophila caviae).